Here is a 286-residue protein sequence, read N- to C-terminus: Putative sensory transducer protein YfmS (286 aa).

The Methyl-accepting transducer domain occupies 68-286 (ITDAIRSNQK…KMAEKALEEE (219 aa)).

This sequence belongs to the methyl-accepting chemotaxis (MCP) protein family.

Chemotactic-signal transducers respond to changes in the concentration of attractants and repellents in the environment, transduce a signal from the outside to the inside of the cell, and facilitate sensory adaptation through the variation of the level of methylation. Attractants increase the level of methylation while repellents decrease the level of methylation. The protein is Putative sensory transducer protein YfmS (yfmS) of Bacillus subtilis (strain 168).